Reading from the N-terminus, the 232-residue chain is Thiamine import ATP-binding protein ThiQ (232 aa).

The ABC transporter domain occupies 2 to 230; the sequence is LKLTDITWLY…KASASALLGI (229 aa). 32 to 39 is an ATP binding site; sequence GPSGAGKS.

The protein belongs to the ABC transporter superfamily. Thiamine importer (TC 3.A.1.19.1) family. The complex is composed of two ATP-binding proteins (ThiQ), two transmembrane proteins (ThiP) and a solute-binding protein (ThiB).

Its subcellular location is the cell inner membrane. It catalyses the reaction thiamine(out) + ATP + H2O = thiamine(in) + ADP + phosphate + H(+). Its function is as follows. Part of the ABC transporter complex ThiBPQ involved in thiamine import. Responsible for energy coupling to the transport system. In Escherichia coli O6:H1 (strain CFT073 / ATCC 700928 / UPEC), this protein is Thiamine import ATP-binding protein ThiQ.